The following is a 673-amino-acid chain: Thimet-like oligopeptidase (673 aa).

Residue H465 coordinates Zn(2+). E466 is an active-site residue. 2 residues coordinate Zn(2+): H469 and H472.

This sequence belongs to the peptidase M3 family. Requires Zn(2+) as cofactor.

The protein is Thimet-like oligopeptidase of Dictyostelium discoideum (Social amoeba).